A 479-amino-acid polypeptide reads, in one-letter code: Ribosomal RNA small subunit methyltransferase F (479 aa).

S-adenosyl-L-methionine contacts are provided by residues 125–131 (AAAPGSK), E149, D176, and D194. C247 acts as the Nucleophile in catalysis.

Belongs to the class I-like SAM-binding methyltransferase superfamily. RsmB/NOP family.

It is found in the cytoplasm. It catalyses the reaction cytidine(1407) in 16S rRNA + S-adenosyl-L-methionine = 5-methylcytidine(1407) in 16S rRNA + S-adenosyl-L-homocysteine + H(+). Specifically methylates the cytosine at position 1407 (m5C1407) of 16S rRNA. This is Ribosomal RNA small subunit methyltransferase F from Salmonella paratyphi A (strain ATCC 9150 / SARB42).